A 438-amino-acid polypeptide reads, in one-letter code: 2-(3-amino-3-carboxypropyl)histidine synthase subunit 1 (438 aa).

The tract at residues Ser7–Ala29 is disordered. [4Fe-4S] cluster is bound by residues Cys110, Cys214, and Cys342. The disordered stretch occupies residues Val391–Val421.

The protein belongs to the DPH1/DPH2 family. DPH1 subfamily. As to quaternary structure, component of the 2-(3-amino-3-carboxypropyl)histidine synthase complex composed of DPH1, DPH2, DPH3 and a NADH-dependent reductase. Interacts with DPH2. Interacts with RBM8A. [4Fe-4S] cluster serves as cofactor. In terms of tissue distribution, expressed in heart, brain, placenta, lung, liver, skeletal muscle, kidney, pancreas, spleen, thymus, mammary gland, colon, small intestine, testis and ovary. Reduced expression in primary breast and ovarian tumors.

It localises to the nucleus. The protein resides in the cytoplasm. It carries out the reaction L-histidyl-[translation elongation factor 2] + S-adenosyl-L-methionine = 2-[(3S)-amino-3-carboxypropyl]-L-histidyl-[translation elongation factor 2] + S-methyl-5'-thioadenosine + H(+). The protein operates within protein modification; peptidyl-diphthamide biosynthesis. Functionally, catalyzes the first step of diphthamide biosynthesis, a post-translational modification of histidine which occurs in elongation factor 2. DPH1 and DPH2 transfer a 3-amino-3-carboxypropyl (ACP) group from S-adenosyl-L-methionine (SAM) to a histidine residue, the reaction is assisted by a reduction system comprising DPH3 and a NADH-dependent reductase. Acts as a tumor suppressor. The protein is 2-(3-amino-3-carboxypropyl)histidine synthase subunit 1 of Homo sapiens (Human).